A 140-amino-acid polypeptide reads, in one-letter code: MQRQTGHMEDKKRTGLESQGTENAFSDGRDGKDGLLHEGINEPILIPSTIADLEGIRELVRKFRGRLLPFEKCPDFCLRIGGLEASFHKGQEELLEYCEALYLPQPVKMEIVGIVDDVPCLATGMQLLILVAEGGRGICL.

The span at 1-15 (MQRQTGHMEDKKRTG) shows a compositional bias: basic and acidic residues. The segment at 1–34 (MQRQTGHMEDKKRTGLESQGTENAFSDGRDGKDG) is disordered.

This is an uncharacterized protein from Gallus gallus (Chicken).